The chain runs to 131 residues: Probable flagellum biosynthesis repressor protein FlbT (131 aa).

The protein belongs to the FlbT family.

Has a post-transcriptional repressor function in flagellum biogenesis. Associates with the 5'-UTR of fljK mRNA and promotes its degradation. This is Probable flagellum biosynthesis repressor protein FlbT from Caulobacter sp. (strain K31).